The primary structure comprises 459 residues: Probable D-serine dehydratase (459 aa).

An N6-(pyridoxal phosphate)lysine modification is found at Lys119.

Belongs to the serine/threonine dehydratase family. DsdA subfamily. Pyridoxal 5'-phosphate is required as a cofactor.

It catalyses the reaction D-serine = pyruvate + NH4(+). The polypeptide is Probable D-serine dehydratase (Geobacillus stearothermophilus (Bacillus stearothermophilus)).